A 91-amino-acid polypeptide reads, in one-letter code: Ribonuclease P protein component 4 (91 aa).

Residues C48, C51, C71, and C74 each coordinate Zn(2+).

Belongs to the eukaryotic/archaeal RNase P protein component 4 family. As to quaternary structure, consists of a catalytic RNA component and at least 4-5 protein subunits. Requires Zn(2+) as cofactor.

The protein resides in the cytoplasm. The catalysed reaction is Endonucleolytic cleavage of RNA, removing 5'-extranucleotides from tRNA precursor.. Its function is as follows. Part of ribonuclease P, a protein complex that generates mature tRNA molecules by cleaving their 5'-ends. The sequence is that of Ribonuclease P protein component 4 from Picrophilus torridus (strain ATCC 700027 / DSM 9790 / JCM 10055 / NBRC 100828 / KAW 2/3).